Consider the following 276-residue polypeptide: Casein kinase II subunit beta-3 (276 aa).

Disordered regions lie at residues 1–22 and 34–86; these read MYKE…LGGA and KKLE…SEGD.

It belongs to the casein kinase 2 subunit beta family. In terms of assembly, heterotetramer of two catalytic alpha subunits and two regulatory beta subunits. Interacts with CCA1. Interacts with LHY. Phosphorylated by alpha subunit.

It localises to the cytoplasm. It is found in the cytosol. The protein resides in the nucleus. Functionally, plays a complex role in regulating the basal catalytic activity of the alpha subunit. The tetrameric holoenzyme CK2, composed of two alpha and two beta subunits, phosphorylates the transcription factor PIF1 after an exposure to light, resulting in a proteasome-dependent degradation of PIF1 and promotion of photomorphogenesis. CK2 phosphorylates translation initiation factors. May participate in the regulation of the initiation of translation. Stimulates the binding of CCA1 to promoters. The chain is Casein kinase II subunit beta-3 (CKB3) from Arabidopsis thaliana (Mouse-ear cress).